The following is a 474-amino-acid chain: Gamma-aminobutyric acid receptor subunit beta-1 (474 aa).

Residues 1–25 (MWTVQNRESLGLLSFPVMVAMVCCA) form the signal peptide. The Extracellular portion of the chain corresponds to 26–245 (HSSNEPSNMS…SFRLKRNIGY (220 aa)). Asn33 and Asn105 each carry an N-linked (GlcNAc...) asparagine glycan. Residue Tyr122 participates in histamine binding. Cys161 and Cys175 are disulfide-bonded. Residue Asn174 is glycosylated (N-linked (GlcNAc...) asparagine). Histamine contacts are provided by residues 181–182 (SY) and Thr227. Positions 182 and 227 each coordinate 4-aminobutanoate. Transmembrane regions (helical) follow at residues 246–267 (FILQ…SFWI), 271–293 (ASAA…STHL), and 305–327 (AIDI…YAFV). Over 328-451 (NYIFFGKGPQ…DLTDVNSIDK (124 aa)) the chain is Cytoplasmic. A helical membrane pass occupies residues 452 to 473 (WSRMFFPITFSLFNVVYWLYYV).

Belongs to the ligand-gated ion channel (TC 1.A.9) family. Gamma-aminobutyric acid receptor (TC 1.A.9.5) subfamily. GABRB1 sub-subfamily. As to quaternary structure, heteropentamer, formed by a combination of alpha (GABRA1-6), beta (GABRB1-3), gamma (GABRG1-3), delta (GABRD), epsilon (GABRE), rho (GABRR1-3), pi (GABRP) and theta (GABRQ) chains, each subunit exhibiting distinct physiological and pharmacological properties. Binds UBQLN1.

The protein localises to the postsynaptic cell membrane. The protein resides in the cell membrane. It carries out the reaction chloride(in) = chloride(out). Its activity is regulated as follows. Potentiated by histamine. Functionally, beta subunit of the heteropentameric ligand-gated chloride channel gated by gamma-aminobutyric acid (GABA), a major inhibitory neurotransmitter in the brain. GABA-gated chloride channels, also named GABA(A) receptors (GABAAR), consist of five subunits arranged around a central pore and contain GABA active binding site(s) located at the alpha and beta subunit interface(s). When activated by GABA, GABAARs selectively allow the flow of chloride anions across the cell membrane down their electrochemical gradient. Chloride influx into the postsynaptic neuron following GABAAR opening decreases the neuron ability to generate a new action potential, thereby reducing nerve transmission. Beta-containing GABAARs can simultaneously bind GABA and histamine where histamine binds at the interface of two neighboring beta subunits, which may be involved in the regulation of sleep and wakefulness. In Rattus norvegicus (Rat), this protein is Gamma-aminobutyric acid receptor subunit beta-1.